Consider the following 239-residue polypeptide: Ribonuclease PH (239 aa).

Phosphate is bound by residues Arg87 and 125 to 127 (GTR).

Belongs to the RNase PH family. Homohexameric ring arranged as a trimer of dimers.

The enzyme catalyses tRNA(n+1) + phosphate = tRNA(n) + a ribonucleoside 5'-diphosphate. Functionally, phosphorolytic 3'-5' exoribonuclease that plays an important role in tRNA 3'-end maturation. Removes nucleotide residues following the 3'-CCA terminus of tRNAs; can also add nucleotides to the ends of RNA molecules by using nucleoside diphosphates as substrates, but this may not be physiologically important. Probably plays a role in initiation of 16S rRNA degradation (leading to ribosome degradation) during starvation. In Ectopseudomonas mendocina (strain ymp) (Pseudomonas mendocina), this protein is Ribonuclease PH.